A 108-amino-acid polypeptide reads, in one-letter code: Putative septation protein SpoVG (108 aa).

It belongs to the SpoVG family.

Its function is as follows. Could be involved in septation. This Bdellovibrio bacteriovorus (strain ATCC 15356 / DSM 50701 / NCIMB 9529 / HD100) protein is Putative septation protein SpoVG.